A 224-amino-acid polypeptide reads, in one-letter code: dTTP/UTP pyrophosphatase (224 aa).

The active-site Proton acceptor is the Asp77.

The protein belongs to the Maf family. YhdE subfamily. Requires a divalent metal cation as cofactor.

It localises to the cytoplasm. It catalyses the reaction dTTP + H2O = dTMP + diphosphate + H(+). The catalysed reaction is UTP + H2O = UMP + diphosphate + H(+). Nucleoside triphosphate pyrophosphatase that hydrolyzes dTTP and UTP. May have a dual role in cell division arrest and in preventing the incorporation of modified nucleotides into cellular nucleic acids. The polypeptide is dTTP/UTP pyrophosphatase (Dehalococcoides mccartyi (strain ATCC BAA-2266 / KCTC 15142 / 195) (Dehalococcoides ethenogenes (strain 195))).